Reading from the N-terminus, the 246-residue chain is Large ribosomal subunit protein uL3 (246 aa).

Position 151 is an N5-methylglutamine (Q151).

The protein belongs to the universal ribosomal protein uL3 family. As to quaternary structure, part of the 50S ribosomal subunit. Forms a cluster with proteins L14 and L19. In terms of processing, methylated by PrmB.

Its function is as follows. One of the primary rRNA binding proteins, it binds directly near the 3'-end of the 23S rRNA, where it nucleates assembly of the 50S subunit. The chain is Large ribosomal subunit protein uL3 from Bartonella bacilliformis (strain ATCC 35685 / KC583 / Herrer 020/F12,63).